A 435-amino-acid chain; its full sequence is Adenylosuccinate lyase (435 aa).

Residues 4–5 (RY), 73–75 (RHD), and 99–100 (TS) each bind N(6)-(1,2-dicarboxyethyl)-AMP. His-147 (proton donor/acceptor) is an active-site residue. Gln-218 lines the N(6)-(1,2-dicarboxyethyl)-AMP pocket. Ser-268 functions as the Proton donor/acceptor in the catalytic mechanism. Residues Ser-269, 274-276 (KKN), Asn-282, and 313-317 (SAERV) each bind N(6)-(1,2-dicarboxyethyl)-AMP.

Belongs to the lyase 1 family. Adenylosuccinate lyase subfamily. Homotetramer. Residues from neighboring subunits contribute catalytic and substrate-binding residues to each active site.

It catalyses the reaction N(6)-(1,2-dicarboxyethyl)-AMP = fumarate + AMP. The catalysed reaction is (2S)-2-[5-amino-1-(5-phospho-beta-D-ribosyl)imidazole-4-carboxamido]succinate = 5-amino-1-(5-phospho-beta-D-ribosyl)imidazole-4-carboxamide + fumarate. It participates in purine metabolism; AMP biosynthesis via de novo pathway; AMP from IMP: step 2/2. The protein operates within purine metabolism; IMP biosynthesis via de novo pathway; 5-amino-1-(5-phospho-D-ribosyl)imidazole-4-carboxamide from 5-amino-1-(5-phospho-D-ribosyl)imidazole-4-carboxylate: step 2/2. In terms of biological role, catalyzes two reactions in de novo purine nucleotide biosynthesis. Catalyzes the breakdown of 5-aminoimidazole- (N-succinylocarboxamide) ribotide (SAICAR or 2-[5-amino-1-(5-phospho-beta-D-ribosyl)imidazole-4-carboxamido]succinate) to 5-aminoimidazole-4-carboxamide ribotide (AICAR or 5-amino-1-(5-phospho-beta-D-ribosyl)imidazole-4-carboxamide) and fumarate, and of adenylosuccinate (ADS or N(6)-(1,2-dicarboxyethyl)-AMP) to adenosine monophosphate (AMP) and fumarate. This chain is Adenylosuccinate lyase (purB), found in Deinococcus radiodurans (strain ATCC 13939 / DSM 20539 / JCM 16871 / CCUG 27074 / LMG 4051 / NBRC 15346 / NCIMB 9279 / VKM B-1422 / R1).